The chain runs to 531 residues: Keratin, type II cytoskeletal 79 (531 aa).

Residues 1-12 are compositionally biased toward polar residues; sequence MRSSLSRQTFST. The tract at residues 1–55 is disordered; that stretch reads MRSSLSRQTFSTKGGFSSNSASGGGGSRMRTSYSSVTMSRGSGGGGGVRSGSSSG. Positions 1 to 138 are head; it reads MRSSLSRQTF…DPEIQRVRTQ (138 aa). Low complexity predominate over residues 28–40; the sequence is RMRTSYSSVTMSR. A compositionally biased stretch (gly residues) spans 41-55; it reads GSGGGGGVRSGSSSG. Residues 139 to 174 form a coil 1A region; it reads EREQIKTLNNKFASFIDKVRFLEQQNKVLETKWALL. Residues 139–453 form the IF rod domain; it reads EREQIKTLNN…KLLESEESRM (315 aa). The segment at 175 to 194 is linker 1; it reads QEQSQNTGVARSLEPFFENY. A coil 1B region spans residues 195–286; that stretch reads LSTLRRQLDT…QLFEMELSQV (92 aa). A linker 12 region spans residues 287-310; the sequence is QTNVSDTNVILSMDNNRNLDLDSI. A coil 2 region spans residues 311 to 449; the sequence is IAEVKAQYEL…ATYRKLLESE (139 aa). A tail region spans residues 450-531; the sequence is ESRMSGDCPS…TTVKTSSRRY (82 aa).

This sequence belongs to the intermediate filament family. In terms of assembly, heterotetramer of two type I and two type II keratins.

The chain is Keratin, type II cytoskeletal 79 (Krt79) from Mus musculus (Mouse).